Consider the following 194-residue polypeptide: uncharacterized protein (194 aa).

The first 15 residues, 1–15, serve as a signal peptide directing secretion; that stretch reads MFVLSIALLSCTTLC. The region spanning 49–134 is the PAN domain; that stretch reads CPQGLHADAI…KATYYEKIRC (86 aa). 2 disulfide bridges follow: Cys49-Cys134 and Cys79-Cys106.

This is an uncharacterized protein from Caenorhabditis elegans.